Here is a 1470-residue protein sequence, read N- to C-terminus: Gag-Pol polyprotein (1470 aa).

G2 is lipidated: N-myristoyl glycine; by host. Residues 16 to 22 carry the Nuclear export signal motif; the sequence is FEHIRLR. The short motif at 26-32 is the Nuclear localization signal element; that stretch reads KKKYQIK. The disordered stretch occupies residues 117–144; the sequence is AVTPPGGQQKNNTGGTATPGGSQNFPAQ. Residues 122 to 144 show a composition bias toward polar residues; that stretch reads GGQQKNNTGGTATPGGSQNFPAQ. CCHC-type zinc fingers lie at residues 398 to 415 and 419 to 436; these read PKCYNCGKFGHMQRQCPE and IKCLKCGKPGHLAKDCRG. The disordered stretch occupies residues 479-504; it reads KEAPAAVCRERETNEKSEQKPPSEQS. Residues 486–504 are compositionally biased toward basic and acidic residues; the sequence is CRERETNEKSEQKPPSEQS. In terms of domain architecture, Peptidase A2 spans 531-602; sequence VKALLDTGAD…TPINIIGRNF (72 aa). D536 serves as the catalytic For protease activity; shared with dimeric partner. Residues 658–848 enclose the Reverse transcriptase domain; the sequence is EGKLSRVGGD…PPFEWMGYKL (191 aa). Mg(2+) is bound by residues D724, D799, and D800. Residues 841–849 are RT 'primer grip'; that stretch reads FEWMGYKLW. The short motif at 1011–1027 is the Tryptophan repeat motif element; the sequence is WEQWWADYWQVSWIPEW. The RNase H type-1 domain occupies 1047 to 1170; it reads IPGEDVYYVD…IDKLVSKGVR (124 aa). Mg(2+)-binding residues include D1056, E1091, D1111, and D1162. The segment at 1176-1217 adopts an Integrase-type zinc-finger fold; that stretch reads GRIEEAQEEHDRYHSNWRNLADTFGLPQIVAKEIVAMCPKCQ. H1185, H1189, C1213, and C1216 together coordinate Zn(2+). The Integrase catalytic domain maps to 1227-1377; the sequence is VDASPGVWQM…TAAERLINMI (151 aa). Mg(2+) contacts are provided by D1237 and D1289. The segment at residues 1396–1443 is a DNA-binding region (integrase-type); the sequence is FRVYYREGRDPVWKGPARLIWKGEGAVVLKEGEELKVVPRRKAKIIKD. A disordered region spans residues 1451–1470; the sequence is GDETHLEGAGGSDHQMAGDS.

As to quaternary structure, homotrimer. Interacts with gp41 (via C-terminus). Homodimer. The active site consists of two apposed aspartic acid residues. In terms of assembly, heterodimer of p66 RT and p51 RT (RT p66/p51). Heterodimerization of RT is essential for DNA polymerase activity. Despite the sequence identities, p66 RT and p51 RT have distinct folding. As to quaternary structure, homotetramer; may further associate as a homohexadecamer. Requires Mg(2+) as cofactor. In terms of processing, specific enzymatic cleavages by the viral protease yield mature proteins. The protease is released by autocatalytic cleavage. The polyprotein is cleaved during and after budding, this process is termed maturation. Proteolytic cleavage of p66 RT removes the RNase H domain to yield the p51 RT subunit. Post-translationally, capsid protein p24 is phosphorylated.

It is found in the virion. It localises to the host nucleus. The protein resides in the host cytoplasm. The protein localises to the host cell membrane. The catalysed reaction is Specific for a P1 residue that is hydrophobic, and P1' variable, but often Pro.. It catalyses the reaction Endohydrolysis of RNA in RNA/DNA hybrids. Three different cleavage modes: 1. sequence-specific internal cleavage of RNA. Human immunodeficiency virus type 1 and Moloney murine leukemia virus enzymes prefer to cleave the RNA strand one nucleotide away from the RNA-DNA junction. 2. RNA 5'-end directed cleavage 13-19 nucleotides from the RNA end. 3. DNA 3'-end directed cleavage 15-20 nucleotides away from the primer terminus.. It carries out the reaction 3'-end directed exonucleolytic cleavage of viral RNA-DNA hybrid.. The enzyme catalyses DNA(n) + a 2'-deoxyribonucleoside 5'-triphosphate = DNA(n+1) + diphosphate. With respect to regulation, the viral protease is inhibited by many synthetic protease inhibitors (PIs), such as amprenavir, atazanavir, indinavir, loprinavir, nelfinavir, ritonavir and saquinavir. RT can be inhibited either by nucleoside RT inhibitors (NRTIs) or by non nucleoside RT inhibitors (NNRTIs). NRTIs act as chain terminators, whereas NNRTIs inhibit DNA polymerization by binding a small hydrophobic pocket near the RT active site and inducing an allosteric change in this region. Classical NRTIs are abacavir, adefovir (PMEA), didanosine (ddI), lamivudine (3TC), stavudine (d4T), tenofovir (PMPA), zalcitabine (ddC), and zidovudine (AZT). Classical NNRTIs are atevirdine (BHAP U-87201E), delavirdine, efavirenz (DMP-266), emivirine (I-EBU), and nevirapine (BI-RG-587). The tritherapies used as a basic effective treatment of AIDS associate two NRTIs and one NNRTI. Use of protease inhibitors in tritherapy regimens permit more ambitious therapeutic strategies. Gag-Pol polyprotein and Gag polyprotein may regulate their own translation, by the binding genomic RNA in the 5'-UTR. At low concentration, Gag-Pol and Gag would promote translation, whereas at high concentration, the polyproteins encapsidate genomic RNA and then shut off translation. Its function is as follows. Matrix protein p17 has two main functions: in infected cell, it targets Gag and Gag-pol polyproteins to the plasma membrane via a multipartite membrane-binding signal, that includes its myristointegration complex. The myristoylation signal and the NLS exert conflicting influences its subcellular localization. The key regulation of these motifs might be phosphorylation of a portion of MA molecules on the C-terminal tyrosine at the time of virus maturation, by virion-associated cellular tyrosine kinase. Implicated in the release from host cell mediated by Vpu. In terms of biological role, capsid protein p24 forms the conical core that encapsulates the genomic RNA-nucleocapsid complex in the virion. The core is constituted by capsid protein hexamer subunits. The core is disassembled soon after virion entry. Interaction with host PPIA/CYPA protects the virus from restriction by host TRIM5-alpha and from an unknown antiviral activity in host cells. This capsid restriction by TRIM5 is one of the factors which restricts SIV to the simian species. Functionally, nucleocapsid protein p7 encapsulates and protects viral dimeric unspliced (genomic) RNA. Binds these RNAs through its zinc fingers. Facilitates rearangement of nucleic acid secondary structure during retrotranscription of genomic RNA. This capability is referred to as nucleic acid chaperone activity. The aspartyl protease mediates proteolytic cleavages of Gag and Gag-Pol polyproteins during or shortly after the release of the virion from the plasma membrane. Cleavages take place as an ordered, step-wise cascade to yield mature proteins. This process is called maturation. Displays maximal activity during the budding process just prior to particle release from the cell. Also cleaves Nef and Vif, probably concomitantly with viral structural proteins on maturation of virus particles. Hydrolyzes host EIF4GI and PABP1 in order to shut off the capped cellular mRNA translation. The resulting inhibition of cellular protein synthesis serves to ensure maximal viral gene expression and to evade host immune response. Its function is as follows. Reverse transcriptase/ribonuclease H (RT) is a multifunctional enzyme that converts the viral dimeric RNA genome into dsDNA in the cytoplasm, shortly after virus entry into the cell. This enzyme displays a DNA polymerase activity that can copy either DNA or RNA templates, and a ribonuclease H (RNase H) activity that cleaves the RNA strand of RNA-DNA heteroduplexes in a partially processive 3' to 5' endonucleasic mode. Conversion of viral genomic RNA into dsDNA requires many steps. A tRNA binds to the primer-binding site (PBS) situated at the 5'-end of the viral RNA. RT uses the 3' end of the tRNA primer to perform a short round of RNA-dependent minus-strand DNA synthesis. The reading proceeds through the U5 region and ends after the repeated (R) region which is present at both ends of viral RNA. The portion of the RNA-DNA heteroduplex is digested by the RNase H, resulting in a ssDNA product attached to the tRNA primer. This ssDNA/tRNA hybridizes with the identical R region situated at the 3' end of viral RNA. This template exchange, known as minus-strand DNA strong stop transfer, can be either intra- or intermolecular. RT uses the 3' end of this newly synthesized short ssDNA to perform the RNA-dependent minus-strand DNA synthesis of the whole template. RNase H digests the RNA template except for two polypurine tracts (PPTs) situated at the 5'-end and near the center of the genome. It is not clear if both polymerase and RNase H activities are simultaneous. RNase H can probably proceed both in a polymerase-dependent (RNA cut into small fragments by the same RT performing DNA synthesis) and a polymerase-independent mode (cleavage of remaining RNA fragments by free RTs). Secondly, RT performs DNA-directed plus-strand DNA synthesis using the PPTs that have not been removed by RNase H as primers. PPTs and tRNA primers are then removed by RNase H. The 3' and 5' ssDNA PBS regions hybridize to form a circular dsDNA intermediate. Strand displacement synthesis by RT to the PBS and PPT ends produces a blunt ended, linear dsDNA copy of the viral genome that includes long terminal repeats (LTRs) at both ends. In terms of biological role, integrase catalyzes viral DNA integration into the host chromosome, by performing a series of DNA cutting and joining reactions. This enzyme activity takes place after virion entry into a cell and reverse transcription of the RNA genome in dsDNA. The first step in the integration process is 3' processing. This step requires a complex comprising the viral genome, matrix protein, Vpr and integrase. This complex is called the pre-integration complex (PIC). The integrase protein removes 2 nucleotides from each 3' end of the viral DNA, leaving recessed CA OH's at the 3' ends. In the second step, the PIC enters cell nucleus. This process is mediated through integrase and Vpr proteins, and allows the virus to infect a non dividing cell. This ability to enter the nucleus is specific of lentiviruses, other retroviruses cannot and rely on cell division to access cell chromosomes. In the third step, termed strand transfer, the integrase protein joins the previously processed 3' ends to the 5' ends of strands of target cellular DNA at the site of integration. The 5'-ends are produced by integrase-catalyzed staggered cuts, 5 bp apart. A Y-shaped, gapped, recombination intermediate results, with the 5'-ends of the viral DNA strands and the 3' ends of target DNA strands remaining unjoined, flanking a gap of 5 bp. The last step is viral DNA integration into host chromosome. This involves host DNA repair synthesis in which the 5 bp gaps between the unjoined strands are filled in and then ligated. Since this process occurs at both cuts flanking the SIV genome, a 5 bp duplication of host DNA is produced at the ends of SIV integration. Alternatively, Integrase may catalyze the excision of viral DNA just after strand transfer, this is termed disintegration. In Cercopithecidae (Old World monkeys), this protein is Gag-Pol polyprotein (gag-pol).